A 250-amino-acid chain; its full sequence is Ribosomal RNA small subunit methyltransferase J (250 aa).

Residues 101–102 (RD), 117–118 (ER), 153–154 (SS), and Asp171 each bind S-adenosyl-L-methionine.

Belongs to the methyltransferase superfamily. RsmJ family.

Its subcellular location is the cytoplasm. The enzyme catalyses guanosine(1516) in 16S rRNA + S-adenosyl-L-methionine = N(2)-methylguanosine(1516) in 16S rRNA + S-adenosyl-L-homocysteine + H(+). Specifically methylates the guanosine in position 1516 of 16S rRNA. In Shigella dysenteriae serotype 1 (strain Sd197), this protein is Ribosomal RNA small subunit methyltransferase J.